The following is a 315-amino-acid chain: Neuroguidin (315 aa).

An N-acetylalanine modification is found at alanine 2. The stretch at 5–42 (EVLESDLPNAVALLKNLQEQVMAVTAQVQTLTKKVQAK) forms a coiled coil. The necessary for interaction with EIF4E stretch occupies residues 41-174 (AKAYPTEKGL…KGTAKKYVPP (134 aa)). Serine 121, serine 142, and serine 143 each carry phosphoserine. Residues 123–174 (SENDPLRFKPHPSNMMSKLSSEDEEEDEAEEGQSGASGKKSGKGTAKKYVPP) form a disordered region. Positions 144–153 (EDEEEDEAEE) are enriched in acidic residues. The stretch at 181–205 (YDETEAEREKKRLERAKRRALSSSV) forms a coiled coil. 2 positions are modified to phosphoserine: serine 204 and serine 214. Positions 252–315 (SKREKGRRKR…RKKKGFRRRR (64 aa)) are disordered. Residues 264–276 (VMSSQLHSLTHFS) are compositionally biased toward polar residues. Over residues 295-315 (TKKRKKIPKKGRKKKGFRRRR) the composition is skewed to basic residues.

Belongs to the SAS10 family. As to quaternary structure, part of the small subunit (SSU) processome, composed of more than 70 proteins and the RNA chaperone small nucleolar RNA (snoRNA) U3. Interacts with CPEB1 and EIF4E.

It localises to the nucleus. It is found in the nucleolus. Its subcellular location is the chromosome. The protein resides in the centromere. The protein localises to the cytoplasm. It localises to the cell projection. It is found in the axon. Its subcellular location is the dendrite. The protein resides in the filopodium. Part of the small subunit (SSU) processome, first precursor of the small eukaryotic ribosomal subunit. During the assembly of the SSU processome in the nucleolus, many ribosome biogenesis factors, an RNA chaperone and ribosomal proteins associate with the nascent pre-rRNA and work in concert to generate RNA folding, modifications, rearrangements and cleavage as well as targeted degradation of pre-ribosomal RNA by the RNA exosome. Its dissociation from the complex determines the transition from state pre-A1 to state pre-A1*. Inhibits mRNA translation in a cytoplasmic polyadenylation element (CPE)-dependent manner. The sequence is that of Neuroguidin (NGDN) from Bos taurus (Bovine).